The primary structure comprises 367 residues: Phosphoribosylaminoimidazole-succinocarboxamide synthase (367 aa).

This sequence belongs to the SAICAR synthetase family.

The enzyme catalyses 5-amino-1-(5-phospho-D-ribosyl)imidazole-4-carboxylate + L-aspartate + ATP = (2S)-2-[5-amino-1-(5-phospho-beta-D-ribosyl)imidazole-4-carboxamido]succinate + ADP + phosphate + 2 H(+). It functions in the pathway purine metabolism; IMP biosynthesis via de novo pathway; 5-amino-1-(5-phospho-D-ribosyl)imidazole-4-carboxamide from 5-amino-1-(5-phospho-D-ribosyl)imidazole-4-carboxylate: step 1/2. This chain is Phosphoribosylaminoimidazole-succinocarboxamide synthase, found in Vibrio campbellii (strain ATCC BAA-1116).